Here is a 488-residue protein sequence, read N- to C-terminus: Probable malate:quinone oxidoreductase (488 aa).

This sequence belongs to the MQO family. FAD is required as a cofactor.

The catalysed reaction is (S)-malate + a quinone = a quinol + oxaloacetate. The protein operates within carbohydrate metabolism; tricarboxylic acid cycle; oxaloacetate from (S)-malate (quinone route): step 1/1. In Neisseria meningitidis serogroup C (strain 053442), this protein is Probable malate:quinone oxidoreductase.